Here is a 129-residue protein sequence, read N- to C-terminus: Small ribosomal subunit protein uS11 (129 aa).

The protein belongs to the universal ribosomal protein uS11 family. In terms of assembly, part of the 30S ribosomal subunit. Interacts with proteins S7 and S18. Binds to IF-3.

Its function is as follows. Located on the platform of the 30S subunit, it bridges several disparate RNA helices of the 16S rRNA. Forms part of the Shine-Dalgarno cleft in the 70S ribosome. The chain is Small ribosomal subunit protein uS11 from Mesorhizobium japonicum (strain LMG 29417 / CECT 9101 / MAFF 303099) (Mesorhizobium loti (strain MAFF 303099)).